The following is a 142-amino-acid chain: Peptide methionine sulfoxide reductase MsrB (142 aa).

The region spanning 2 to 125 (LKKDKSELTD…NSAAIQFIPY (124 aa)) is the MsrB domain. Cys114 functions as the Nucleophile in the catalytic mechanism.

The protein belongs to the MsrB Met sulfoxide reductase family.

It catalyses the reaction L-methionyl-[protein] + [thioredoxin]-disulfide + H2O = L-methionyl-(R)-S-oxide-[protein] + [thioredoxin]-dithiol. In Staphylococcus aureus (strain USA300), this protein is Peptide methionine sulfoxide reductase MsrB.